The primary structure comprises 211 residues: Ribonuclease P protein component 3 (211 aa).

It belongs to the eukaryotic/archaeal RNase P protein component 3 family. As to quaternary structure, consists of a catalytic RNA component and at least 4-5 protein subunits.

It localises to the cytoplasm. It catalyses the reaction Endonucleolytic cleavage of RNA, removing 5'-extranucleotides from tRNA precursor.. Functionally, part of ribonuclease P, a protein complex that generates mature tRNA molecules by cleaving their 5'-ends. In Aeropyrum pernix (strain ATCC 700893 / DSM 11879 / JCM 9820 / NBRC 100138 / K1), this protein is Ribonuclease P protein component 3.